Consider the following 111-residue polypeptide: COX assembly mitochondrial protein (111 aa).

The CHCH domain occupies Tyr39 to Glu82. Short sequence motifs (cx9C motif) lie at residues Cys42–Cys52 and Cys64–Cys74. Intrachain disulfides connect Cys42/Cys74 and Cys52/Cys64.

It belongs to the CMC family.

It localises to the mitochondrion inner membrane. Its function is as follows. Required for mitochondrial cytochrome c oxidase (COX) assembly and respiration. Binds copper. May be involved in copper trafficking and distribution to mitochondrial COX and SOD1. The sequence is that of COX assembly mitochondrial protein (CMC1) from Saccharomyces cerevisiae (strain YJM789) (Baker's yeast).